The following is a 622-amino-acid chain: Low affinity potassium transport system protein Kup (622 aa).

The next 12 membrane-spanning stretches (helical) occupy residues 9 to 29 (LSAV…TSPL), 46 to 66 (PDVV…VVSV), 101 to 121 (ILVV…VITP), 137 to 157 (PALD…LFVI), 165 to 185 (VGKL…LLGL), 213 to 233 (VSFF…ALYA), 247 to 267 (WFTV…ALLL), 276 to 296 (PFFL…ATLA), 337 to 357 (IYIP…IIGF), 363 to 383 (LAAA…ILFC), 395 to 415 (FLVV…FSAN), and 416 to 436 (VLKL…MFII).

It belongs to the HAK/KUP transporter (TC 2.A.72) family.

It is found in the cell inner membrane. It carries out the reaction K(+)(in) + H(+)(in) = K(+)(out) + H(+)(out). In terms of biological role, responsible for the low-affinity transport of potassium into the cell. Likely operates as a K(+):H(+) symporter. This chain is Low affinity potassium transport system protein Kup, found in Yersinia pestis bv. Antiqua (strain Antiqua).